The sequence spans 707 residues: Polyribonucleotide nucleotidyltransferase (707 aa).

Mg(2+) contacts are provided by aspartate 486 and aspartate 492. Residues 553-612 (PRIHTIKINPEKIKDVIGKGGSVIRALTEETGTTIEIEDDGTVKIAATDGDKAKHAIRRI) form the KH domain. The 69-residue stretch at 622-690 (GRIYQGKVTR…RQGRVRLSIK (69 aa)) folds into the S1 motif domain.

This sequence belongs to the polyribonucleotide nucleotidyltransferase family. As to quaternary structure, component of the RNA degradosome, which is a multiprotein complex involved in RNA processing and mRNA degradation. Mg(2+) is required as a cofactor.

It is found in the cytoplasm. It catalyses the reaction RNA(n+1) + phosphate = RNA(n) + a ribonucleoside 5'-diphosphate. In terms of biological role, involved in mRNA degradation. Catalyzes the phosphorolysis of single-stranded polyribonucleotides processively in the 3'- to 5'-direction. The chain is Polyribonucleotide nucleotidyltransferase from Edwardsiella ictaluri (strain 93-146).